The chain runs to 348 residues: D-erythrose-4-phosphate dehydrogenase (348 aa).

Residues 12-13 (RI) and arginine 81 each bind NAD(+). Residues 154-156 (SCT), arginine 200, 213-214 (TK), and arginine 236 each bind substrate. The active-site Nucleophile is cysteine 155. Asparagine 318 provides a ligand contact to NAD(+).

The protein belongs to the glyceraldehyde-3-phosphate dehydrogenase family. Epd subfamily. As to quaternary structure, homotetramer.

Its subcellular location is the cytoplasm. It catalyses the reaction D-erythrose 4-phosphate + NAD(+) + H2O = 4-phospho-D-erythronate + NADH + 2 H(+). It functions in the pathway cofactor biosynthesis; pyridoxine 5'-phosphate biosynthesis; pyridoxine 5'-phosphate from D-erythrose 4-phosphate: step 1/5. Its function is as follows. Catalyzes the NAD-dependent conversion of D-erythrose 4-phosphate to 4-phosphoerythronate. This is D-erythrose-4-phosphate dehydrogenase from Salmonella gallinarum (strain 287/91 / NCTC 13346).